The chain runs to 461 residues: Argininosuccinate lyase (461 aa).

The protein belongs to the lyase 1 family. Argininosuccinate lyase subfamily.

The protein localises to the cytoplasm. It catalyses the reaction 2-(N(omega)-L-arginino)succinate = fumarate + L-arginine. Its pathway is amino-acid biosynthesis; L-arginine biosynthesis; L-arginine from L-ornithine and carbamoyl phosphate: step 3/3. This Dehalococcoides mccartyi (strain ATCC BAA-2100 / JCM 16839 / KCTC 5957 / BAV1) protein is Argininosuccinate lyase.